A 448-amino-acid chain; its full sequence is Glutamyl-tRNA reductase (448 aa).

Substrate is bound by residues T49–R52, S109, E114–Q116, and Q120. The active-site Nucleophile is C50. G189–G194 is an NADP(+) binding site.

This sequence belongs to the glutamyl-tRNA reductase family. In terms of assembly, homodimer.

It carries out the reaction (S)-4-amino-5-oxopentanoate + tRNA(Glu) + NADP(+) = L-glutamyl-tRNA(Glu) + NADPH + H(+). It functions in the pathway porphyrin-containing compound metabolism; protoporphyrin-IX biosynthesis; 5-aminolevulinate from L-glutamyl-tRNA(Glu): step 1/2. In terms of biological role, catalyzes the NADPH-dependent reduction of glutamyl-tRNA(Glu) to glutamate 1-semialdehyde (GSA). The sequence is that of Glutamyl-tRNA reductase from Staphylococcus epidermidis (strain ATCC 35984 / DSM 28319 / BCRC 17069 / CCUG 31568 / BM 3577 / RP62A).